A 476-amino-acid chain; its full sequence is Protein transport protein Sec61 subunit alpha (476 aa).

The Cytoplasmic segment spans residues 2 to 33 (GIKFLEVIKPFCAVLPEIQKPERKIQFREKVL). A helical membrane pass occupies residues 34–53 (WTAITLFIFLVCCQIPLFGI). The Lumenal portion of the chain corresponds to 54 to 76 (MSSDSADPFYWMRVILASNRGTL). The helical transmembrane segment at 77–96 (MELGISPIVTSDLIMQLLAG) threads the bilayer. The Cytoplasmic segment spans residues 97–117 (AKIIEVGDSPKDRALFNGAQK). Residues 118–138 (LFGMIITIGQAIVYVMTGMYG) traverse the membrane as a helical segment. The Lumenal segment spans residues 139–144 (DPSEMG). Residues 145 to 165 (AGICLVIIIQLFVAGLIVLLL) traverse the membrane as a helical segment. Over 166-172 (DELLQKG) the chain is Cytoplasmic. The chain crosses the membrane as a helical span at residues 173-193 (YGLGSGISLLIATNICETIVW). At 194-240 (KAFSPTTVNTGRGTEFEGAIIALFHLLATRTDKVRALREAFYRQNLP) the chain is on the lumenal side. The helical transmembrane segment at 241-261 (NLMNLIATVFVFAVVIYFQGF) threads the bilayer. Residues 262–288 (RVDLPIKSARYRGQYNTYPIKLFYTSN) lie on the Cytoplasmic side of the membrane. Residues 289 to 309 (IPIILQSALVSNLYVISQMLS) traverse the membrane as a helical segment. Over 310–354 (TRFSGNFIVNLLGTWSDTSTGGPARAYPVGGLCYFLSPPESFGSV) the chain is Lumenal. Residues 355–375 (LDDPVHAAIYIVFMLGSCAFF) traverse the membrane as a helical segment. At 376–420 (SKTWIEVSGSSAKDVAKQLKEQQMVMRGHRETSMVHELNRYIPTA) the chain is on the cytoplasmic side. Residues 421-441 (AAFGGLCIGGLSVMADFLGAI) traverse the membrane as a helical segment. Residues 442 to 445 (GSGT) lie on the Lumenal side of the membrane. Residues 446-462 (GILLAVTIIYQYFEIFV) form a helical membrane-spanning segment. The Cytoplasmic segment spans residues 463 to 476 (KEQSEMGSMGGLFF).

The protein belongs to the SecY/SEC61-alpha family. As to quaternary structure, the SEC61 channel-forming translocon complex consists of channel-forming core components SEC61A1, SEC61B and SEC61G and different auxiliary components such as SEC62 and SEC63. The SEC61 channel associates with the multi-pass translocon (MPT) complex.

The protein localises to the endoplasmic reticulum membrane. Functionally, component of SEC61 channel-forming translocon complex that mediates transport of signal peptide-containing precursor polypeptides across the endoplasmic reticulum (ER). Forms a ribosome receptor and a gated pore in the ER membrane, both functions required for cotranslational translocation of nascent polypeptides. May cooperate with auxiliary protein SEC62, SEC63 and HSPA5/BiP to enable post-translational transport of small presecretory proteins. The SEC61 channel is also involved in ER membrane insertion of transmembrane proteins: it mediates membrane insertion of the first few transmembrane segments of proteins, while insertion of subsequent transmembrane regions of multi-pass membrane proteins is mediated by the multi-pass translocon (MPT) complex. The protein is Protein transport protein Sec61 subunit alpha (sec61a) of Boreogadus saida (Polar cod).